The primary structure comprises 371 residues: Zinc finger CCCH domain-containing protein 21 (371 aa).

The disordered stretch occupies residues 1 to 64 (MPPKQQPKAD…AAKKKKEEEK (64 aa)). Basic and acidic residues predominate over residues 10–23 (DLAKKQKQVEDKTF). Polar residues predominate over residues 34-46 (VQKYVQSLKQSVQ). 2 consecutive C3H1-type zinc fingers follow at residues 88 to 115 (DPKS…HDLN) and 159 to 197 (KPTD…HALP). Coiled coils occupy residues 205-237 (QMKA…ATQM) and 283-317 (FVDD…GTSK). The interval 290–371 (CEEYEREREQ…IREPNDEGSS (82 aa)) is disordered. Over residues 292–312 (EYEREREQEETEQKAKNKEAE) the composition is skewed to basic and acidic residues. A compositionally biased stretch (acidic residues) spans 330–352 (NEEEEDDDDDDDDLDMDELDELE).

The protein is Zinc finger CCCH domain-containing protein 21 of Arabidopsis thaliana (Mouse-ear cress).